The chain runs to 1690 residues: MAGVGPGGYAAEFVPPPECPVFEPSWEEFTDPLSFIGRIRPLAEKTGICKIRPPKDWQPPFACEVKSFRFTPRVQRLNELEAMTRVRLDFLDQLAKFWELQGSTLKIPVVERKILDLYALSKIVASKGGFEMVTKEKKWSKVGSRLGYLPGKGTGSLLKSHYERILYPYELFQSGVSLMGVQMPNLDLKEKVEPEVLSTDTQTSPEPGTRMNILPKRTRRVKTQSESGDVSRNTELKKLQIFGAGPKVVGLAMGTKDKEDEVTRRRKVTNRSDAFNMQMRQRKGTLSVNFVDLYVCMFCGRGNNEDKLLLCDGCDDSYHTFCLIPPLPDVPKGDWRCPKCVAEECSKPREAFGFEQAVREYTLQSFGEMADNFKSDYFNMPVHMVPTELVEKEFWRLVSSIEEDVIVEYGADISSKDFGSGFPVKDGRRKILPEEEEYALSGWNLNNMPVLEQSVLAHINVDISGMKVPWLYVGMCFSSFCWHIEDHWSYSINYLHWGEPKTWYGVPSHAAEQLEEVMRELAPELFESQPDLLHQLVTIMNPNVLMEHGVPVYRTNQCAGEFVVTFPRAYHSGFNQGYNFAEAVNFCTADWLPIGRQCVNHYRRLRRHCVFSHEELIFKMAADPECLDVGLAAMVCKELTLMTEEETRLRESVVQMGVLMSEEEVFELVPDDERQCSACRTTCFLSALTCSCNPERLVCLYHPTDLCPCPMQKKCLRYRYPLEDLPSLLYGVKVRAQSYDTWVSRVTEALSANFNHKKDLIELRVMLEDAEDRKYPENDLFRKLRDAVKEAETCASVAQLLLSKKQKHRQSPDSGRTRTKLTVEELKAFVQQLFSLPCVISQARQVKNLLDDVEEFHERAQEAMMDETPDSSKLQMLIDMGSSLYVELPELPRLKQELQQARWLDEVRLTLSDPQQVTLDVMKKLIDSGVGLAPHHAVEKAMAELQELLTVSERWEEKAKVCLQARPRHSVASLESIVNEAKNIPAFLPNVLSLKEALQKAREWTAKVEAIQSGSNYAYLEQLESLSAKGRPIPVRLEALPQVESQVAAARAWRERTGRTFLKKNSSHTLLQVLSPRTDIGVYGSGKNRRKKVKELIEKEKEKDLDLEPLSDLEEGLEETRDTAMVVAVFKEREQKEIEAMHSLRAANLAKMTMVDRIEEVKFCICRKTASGFMLQCELCKDWFHNSCVPLPKSSSQKKGSSWQAKEVKFLCPLCMRSRRPRLETILSLLVSLQKLPVRLPEGEALQCLTERAMSWQDRARQALATDELSSALAKLSVLSQRMVEQAAREKTEKIISAELQKAAANPDLQGHLPSFQQSAFNRVVSSVSSSPRQTMDYDDEETDSDEDIRETYGYDMKDTASVKSSSSLEPNLFCDEEIPIKSEEVVTHMWTAPSFCAEHAYSSASKSCSQGSSTPRKQPRKSPLVPRSLEPPVLELSPGAKAQLEELMMVGDLLEVSLDETQHIWRILQATHPPSEDRFLHIMEDDSMEEKPLKVKGKDSSEKKRKRKLEKVEQLFGEGKQKSKELKKMDKPRKKKLKLGADKSKELNKLAKKLAKEEERKKKKEKAAAAKVELVKESTEKKREKKVLDIPSKYDWSGAEESDDENAVCAAQNCQRPCKDKVDWVQCDGGCDEWFHQVCVGVSPEMAENEDYICINCAKKQGPVSPGPAPPPSFIMSYKLPMEDLKETS.

The region spanning 19 to 60 (CPVFEPSWEEFTDPLSFIGRIRPLAEKTGICKIRPPKDWQPP) is the JmjN domain. Residues 84-174 (TRVRLDFLDQ…ILYPYELFQS (91 aa)) enclose the ARID domain. Residue Lys-191 forms a Glycyl lysine isopeptide (Lys-Gly) (interchain with G-Cter in SUMO2) linkage. Ser-204 is modified (phosphoserine). The PHD-type 1 zinc-finger motif lies at 293-343 (LYVCMFCGRGNNEDKLLLCDGCDDSYHTFCLIPPLPDVPKGDWRCPKCVAE). Residue Tyr-409 coordinates 2-oxoglutarate. The GSGFP motif motif lies at 419–423 (GSGFP). The JmjC domain occupies 437–603 (EYALSGWNLN…IGRQCVNHYR (167 aa)). Residues His-483 and Glu-485 each contribute to the Fe cation site. 2-oxoglutarate is bound by residues Ser-491, Asn-493, and Lys-501. His-571 is a Fe cation binding site. A C5HC2 zinc finger spans residues 676–728 (CSACRTTCFLSALTCSCNPERLVCLYHPTDLCPCPMQKKCLRYRYPLEDLPSL). Lys-1007 participates in a covalent cross-link: Glycyl lysine isopeptide (Lys-Gly) (interchain with G-Cter in SUMO2). Phosphoserine is present on Ser-1111. The PHD-type 2 zinc-finger motif lies at 1161–1218 (VKFCICRKTASGFMLQCELCKDWFHNSCVPLPKSSSQKKGSSWQAKEVKFLCPLCMRS). 2 disordered regions span residues 1327-1348 (SVSSSPRQTMDYDDEETDSDED) and 1407-1433 (KSCSQGSSTPRKQPRKSPLVPRSLEPP). Phosphoserine occurs at positions 1330 and 1331. The segment covering 1337–1348 (DYDDEETDSDED) has biased composition (acidic residues). Residue Thr-1343 is modified to Phosphothreonine. Ser-1345 is modified (phosphoserine). 2 positions are modified to phosphoserine: Ser-1438 and Ser-1488. Composition is skewed to basic and acidic residues over residues 1490–1503 (EEKPLKVKGKDSSE) and 1520–1530 (GKQKSKELKKM). 2 disordered regions span residues 1490 to 1509 (EEKPLKVKGKDSSEKKRKRK) and 1516 to 1543 (LFGEGKQKSKELKKMDKPRKKKLKLGAD). A Phosphotyrosine modification is found at Tyr-1595. 2 positions are modified to phosphoserine: Ser-1598 and Ser-1603. The PHD-type 3 zinc-finger motif lies at 1607–1661 (NAVCAAQNCQRPCKDKVDWVQCDGGCDEWFHQVCVGVSPEMAENEDYICINCAKK). The tract at residues 1623-1690 (VDWVQCDGGC…LPMEDLKETS (68 aa)) is interaction with LMO2. Position 1666 is a phosphoserine (Ser-1666).

The protein belongs to the JARID1 histone demethylase family. As to quaternary structure, interacts with SUZ12; the interaction is direct. Interacts with the viral protein-binding domain of RB1. Interacts with ESR1, MYC, MYCN and LMO2. Interacts with HDAC1; this interaction impairs histone deacetylation by HDAC1. Interacts with BMAL1 and CLOCK. Interacts (via PHD-type 1 zinc finger) with histone H3 unmodified at 'Lys-4' and (via PHD-type 3 zinc finger) with histone H3 di- and trimethylated at 'Lys-4'. Fe(2+) is required as a cofactor.

The protein localises to the nucleus. It is found in the nucleolus. The catalysed reaction is N(6),N(6),N(6)-trimethyl-L-lysyl(4)-[histone H3] + 3 2-oxoglutarate + 3 O2 = L-lysyl(4)-[histone H3] + 3 formaldehyde + 3 succinate + 3 CO2. The inhibitors KDOAM-25, CPI-455 and others inhibits its demethylase activity, resulting to cell growth arrest in cancer cells. In terms of biological role, histone demethylase that specifically demethylates 'Lys-4' of histone H3, thereby playing a central role in histone code. Does not demethylate histone H3 'Lys-9', H3 'Lys-27', H3 'Lys-36', H3 'Lys-79' or H4 'Lys-20'. Demethylates trimethylated and dimethylated but not monomethylated H3 'Lys-4'. Regulates specific gene transcription through DNA-binding on 5'-CCGCCC-3' motif. May stimulate transcription mediated by nuclear receptors. Involved in transcriptional regulation of Hox proteins during cell differentiation. May participate in transcriptional repression of cytokines such as CXCL12. Plays a role in the regulation of the circadian rhythm and in maintaining the normal periodicity of the circadian clock. In a histone demethylase-independent manner, acts as a coactivator of the CLOCK-BMAL1-mediated transcriptional activation of PER1/2 and other clock-controlled genes and increases histone acetylation at PER1/2 promoters by inhibiting the activity of HDAC1. Seems to act as a transcriptional corepressor for some genes such as MT1F and to favor the proliferation of cancer cells. The chain is Lysine-specific demethylase 5A from Homo sapiens (Human).